Reading from the N-terminus, the 262-residue chain is Tryptophan synthase alpha chain (262 aa).

Active-site proton acceptor residues include E47 and D58.

Belongs to the TrpA family. As to quaternary structure, tetramer of two alpha and two beta chains.

It catalyses the reaction (1S,2R)-1-C-(indol-3-yl)glycerol 3-phosphate + L-serine = D-glyceraldehyde 3-phosphate + L-tryptophan + H2O. It functions in the pathway amino-acid biosynthesis; L-tryptophan biosynthesis; L-tryptophan from chorismate: step 5/5. In terms of biological role, the alpha subunit is responsible for the aldol cleavage of indoleglycerol phosphate to indole and glyceraldehyde 3-phosphate. This chain is Tryptophan synthase alpha chain, found in Chromobacterium violaceum (strain ATCC 12472 / DSM 30191 / JCM 1249 / CCUG 213 / NBRC 12614 / NCIMB 9131 / NCTC 9757 / MK).